The primary structure comprises 353 residues: Glycerol-3-phosphate dehydrogenase [NAD(+)], cytoplasmic (353 aa).

A2 carries the blocked amino end (Ala) modification. NAD(+)-binding positions include 11 to 16, F98, K121, and A155; that span reads GSGNWG. K121 is a substrate binding site. Catalysis depends on K206, which acts as the Proton acceptor. NAD(+)-binding residues include R270 and Q299. A substrate-binding site is contributed by 270–271; it reads RN.

It belongs to the NAD-dependent glycerol-3-phosphate dehydrogenase family. As to quaternary structure, homodimer.

It localises to the cytoplasm. The catalysed reaction is sn-glycerol 3-phosphate + NAD(+) = dihydroxyacetone phosphate + NADH + H(+). The protein operates within phospholipid metabolism; alpha-glycerophosphate cycle. The sequence is that of Glycerol-3-phosphate dehydrogenase [NAD(+)], cytoplasmic from Drosophila virilis (Fruit fly).